A 1174-amino-acid chain; its full sequence is MAAQEDRLDSFGMQHGILLSSSPSLQPPYNHQEYAWDFQRYLNKLQSLRPSDSESFRTEINLLLDQLISQDYTPGVTGIGQEEVCAILVQACRLVQHNQEHLVSKVCQLVHYLLNRLQVIVDEQNLDFLLAFSISALKQCSSWTHADVLHALAALVYNNGSKCQKYLNELLGPTGILVNLCDPSQPDPELWREAIHCMANLCLGVPGHPYLDEPYRMTCFKNFLTVLQTPKPNIVDDIAVCTLLQNALKGIQSLLNGSKIKLLETGQLGSLLAVLKKYMFHGLPGLSIEMPTVLYPTPLAQYDGRSPTKPEQPEAAVNQPTWSKKKRKAGKQKKGHQGEESKEELKNEIGAEINKDLEKMKLCSGEAQHSLYLGPQKSPLDPHQGQVGKDHFSPQVQRYKKINSSDSEYSDAEGSLQNKIRSFQAKVRQGALSCFLSTIKSIEKKVLYGYWSAFVPDISGIGSPQSVSLMTIALKDSSPKTRACALQVLSAILDGSKQFLSVADDASDHKRAFTPLSVTLASSIRELHRCLLLAIVAESSAQTLTQIIKCLANLVSNAPYHRLKPGLLTRVWNQIKPYIRNKDVNVRVSSLTLLGAIVSAQVSLPEVQLLLQQPLYSLSQNSGSATPSDPESNRKESMLEGGKKNGLHSEHSQSCWLIRLCITLVVEPREDSYSDSEPSSTPAVMYEPSPVRLEALQVLACLVKGCFNMAQSYLIELGEVACKCMQETDASIQLHGAKLLEELGTGIVQQQKPDSIVPINLMVPINQAVTFWNMILNGPLPAALQNEQHPTLQTSACDALSSVLPEAFSNLPNDRQILCITLLLGLNHSENPLVKAAAARALGVYILFPCLRQDVMFVADTANAILMCLSDRSPNVRAKAAWSLGNLTDSLIVNMEAMGQSFQEEFSDMLLLKMLWAATEASKDKDKVKSNAVRALGNLLHFLQPYHIVKPRFCESIECAIQALVSTVLGDGTMKVKWNACYALGNVFKNTALPLGKATWTAAAYNALTTVVKACKNFKVRIKSAMALSIPFSREQYGSTEQYCDIWNALVTALQKSEDTEDFLEFKYSASLREQICQALIHLLSLASQEDLPRIRKTLLEKGDSIRNYVLHYVKSEVQGDESQREHQDRGKMLQRAIEHIRGFEELPGSNKGLIEVAYFEAILVSCDKEMEAL.

The stretch at 168-207 is one HEAT 1 repeat; sequence NELLGPTGILVNLCDPSQPDPELWREAIHCMANLCLGVPG. Disordered regions lie at residues 304–346 and 373–392; these read GRSP…EELK and LGPQ…KDHF. Positions 323–335 are enriched in basic residues; it reads SKKKRKAGKQKKG. Residues 336–346 are compositionally biased toward basic and acidic residues; the sequence is HQGEESKEELK. 3 HEAT repeats span residues 460 to 498, 523 to 560, and 566 to 603; these read GIGS…GSKQ, SIRE…NAPY, and GLLT…AQVS. The tract at residues 619 to 648 is disordered; that stretch reads SQNSGSATPSDPESNRKESMLEGGKKNGLH. A compositionally biased stretch (basic and acidic residues) spans 631-648; it reads ESNRKESMLEGGKKNGLH.

The polypeptide is HEAT repeat-containing protein 6 (heatr6) (Xenopus laevis (African clawed frog)).